The sequence spans 591 residues: General transcription and DNA repair factor IIH subunit TFB1-1 (591 aa).

BSD domains follow at residues 112 to 166 (STSS…GKDS) and 191 to 243 (RTNR…YLYS).

Belongs to the TFB1 family. As to quaternary structure, component of the 7-subunit TFIIH core complex composed of XPB, XPD, TFB1/GTF2H1, GTF2H2/P44, TFB4/GTF2H3, TFB2/GTF2H4 and TFB5/GTF2H5, which is active in NER. The core complex associates with the 3-subunit CDK-activating kinase (CAK) module composed of CYCH1/cyclin H1, CDKD and MAT1/At4g30820 to form the 10-subunit holoenzyme (holo-TFIIH) active in transcription.

The protein localises to the nucleus. Component of the general transcription and DNA repair factor IIH (TFIIH) core complex, which is involved in general and transcription-coupled nucleotide excision repair (NER) of damaged DNA and, when complexed to CAK, in RNA transcription by RNA polymerase II. In NER, TFIIH acts by opening DNA around the lesion to allow the excision of the damaged oligonucleotide and its replacement by a new DNA fragment. In transcription, TFIIH has an essential role in transcription initiation. When the pre-initiation complex (PIC) has been established, TFIIH is required for promoter opening and promoter escape. Phosphorylation of the C-terminal tail (CTD) of the largest subunit of RNA polymerase II by the kinase module CAK controls the initiation of transcription. This is General transcription and DNA repair factor IIH subunit TFB1-1 from Arabidopsis thaliana (Mouse-ear cress).